A 501-amino-acid polypeptide reads, in one-letter code: Nucleic-acid-binding protein from transposon X-element (501 aa).

2 disordered regions span residues 20 to 71 and 105 to 128; these read SSPQ…GNSN and AAAK…SKPP. The segment at 285-302 adopts a CCHC-type zinc-finger fold; it reads VQCHRCQQIGHTAKYCRK. Disordered regions lie at residues 353–385 and 400–443; these read RPRS…SRGG and QPMS…TDAS. Low complexity predominate over residues 407 to 422; it reads QQQKQKQQPYDGSPSR. The segment covering 434–443 has biased composition (polar residues); the sequence is GTLQRSTDAS.

Its subcellular location is the virion. Functionally, strongly basic protein that binds directly to retroviral RNA and may be involved in its packaging and in the reverse transcription process. This chain is Nucleic-acid-binding protein from transposon X-element, found in Drosophila melanogaster (Fruit fly).